The sequence spans 269 residues: Thymidylate synthase (269 aa).

DUMP contacts are provided by residues Arg21 and 125-126 (RR). The active-site Nucleophile is Cys145. DUMP is bound by residues 171–174 (RSGD), Asn182, and 212–214 (HVY). A (6R)-5,10-methylene-5,6,7,8-tetrahydrofolate-binding site is contributed by Asp174. Ala268 contacts (6R)-5,10-methylene-5,6,7,8-tetrahydrofolate.

This sequence belongs to the thymidylate synthase family. Bacterial-type ThyA subfamily. In terms of assembly, homodimer.

It is found in the cytoplasm. It catalyses the reaction dUMP + (6R)-5,10-methylene-5,6,7,8-tetrahydrofolate = 7,8-dihydrofolate + dTMP. Its pathway is pyrimidine metabolism; dTTP biosynthesis. In terms of biological role, catalyzes the reductive methylation of 2'-deoxyuridine-5'-monophosphate (dUMP) to 2'-deoxythymidine-5'-monophosphate (dTMP) while utilizing 5,10-methylenetetrahydrofolate (mTHF) as the methyl donor and reductant in the reaction, yielding dihydrofolate (DHF) as a by-product. This enzymatic reaction provides an intracellular de novo source of dTMP, an essential precursor for DNA biosynthesis. The polypeptide is Thymidylate synthase (Cutibacterium acnes (strain DSM 16379 / KPA171202) (Propionibacterium acnes)).